The chain runs to 299 residues: Prohibitin-2 (299 aa).

The residue at position 2 (Ala2) is an N-acetylalanine. The tract at residues 19–49 (MGTALKLLLGAGAVAYGVRESVFTVEGGHRA) is necessary for transcriptional repression. Tyr128 bears the Phosphotyrosine mark. Residue Lys147 is modified to N6-acetyllysine. The interval 150 to 174 (ASQLITQRAQVSLLIRRELTERAKD) is necessary for transcriptional repression. Phosphoserine is present on Ser151. The stretch at 190–238 (SREYTAAVEAKQVAQQEAQRAQFLVEKAKQEQRQKIVQAEGEAEAAKML) forms a coiled coil. 4 positions are modified to N6-acetyllysine: Lys200, Lys236, Lys250, and Lys262.

Belongs to the prohibitin family. The mitochondrial prohibitin complex consists of two subunits (PHB1 and PHB2), assembled into a membrane-associated ring-shaped supercomplex of approximately 1 mDa. Interacts with ESR1, HDAC1 and HDAC5. Interacts with ZNF703. Interacts with STOML2. Interacts with ARFGEF3. Interacts with SPHK2. Interacts with COX4I1; the interaction associates PHB2 with COX. Interacts with MAP1LC3B (membrane-bound form LC3-II); the interaction is direct and upon mitochondrial depolarization and proteasome-dependent outer membrane rupture. Interacts with IGFBP6 (via C-terminal domain). Interacts with CLPB. Interacts with CD86 (via cytoplasmic domain); the interactions increases after priming with CD40. Interacts with AFG3L2. Interacts with DNAJC19. Interacts with AKT2; this interaction may be important for myogenic differentiation. In terms of processing, phosphorylated. Tyrosine phosphorylation is indirectly stimulated by IGFBP6.

It localises to the mitochondrion inner membrane. Its subcellular location is the cytoplasm. The protein resides in the nucleus. It is found in the cell membrane. Functionally, protein with pleiotropic attributes mediated in a cell-compartment- and tissue-specific manner, which include the plasma membrane-associated cell signaling functions, mitochondrial chaperone, and transcriptional co-regulator of transcription factors and sex steroid hormones in the nucleus. In the mitochondria, together with PHB, forms large ring complexes (prohibitin complexes) in the inner mitochondrial membrane (IMM) and functions as a chaperone protein that stabilizes mitochondrial respiratory enzymes and maintains mitochondrial integrity in the IMM, which is required for mitochondrial morphogenesis, neuronal survival, and normal lifespan. The prohibitin complex, with DNAJC19, regulates cardiolipin remodeling and the protein turnover of OMA1 in a cardiolipin-binding manner. Also regulates cytochrome-c oxidase assembly (COX) and mitochondrial respiration. Binding to sphingoid 1-phosphate (SPP) modulates its regulator activity. Has a key role of mitophagy receptor involved in targeting mitochondria for autophagic degradation. Involved in mitochondrial-mediated antiviral innate immunity, activates RIG-I-mediated signal transduction and production of IFNB1 and pro-inflammatory cytokine IL6. In terms of biological role, in the nucleus, serves as transcriptional co-regulator. Acts as a mediator of transcriptional repression by nuclear hormone receptors via recruitment of histone deacetylases. Functions as an estrogen receptor (ER)-selective coregulator that potentiates the inhibitory activities of antiestrogens and represses the activity of estrogens. Competes with NCOA1 for modulation of ER transcriptional activity. Its function is as follows. In the plasma membrane, is involved in IGFBP6-induced cell migration. Cooperates with CD86 to mediate CD86-signaling in B lymphocytes that regulates the level of IgG1 produced through the activation of distal signaling intermediates. Upon CD40 engagement, required to activate NF-kappa-B signaling pathway via phospholipase C and protein kinase C activation. The polypeptide is Prohibitin-2 (Rattus norvegicus (Rat)).